We begin with the raw amino-acid sequence, 489 residues long: Capsid protein (489 aa).

A disordered region spans residues 79-144 (GETSEEESDS…QPKTIPGQKQ (66 aa)). Acidic residues predominate over residues 81–94 (TSEEESDSGEEPEF). Positions 95–110 (EQVRMDRTGGTEIPKE) are enriched in basic and acidic residues. The short motif at 122 to 125 (RKRK) is the Nuclear localization signal element. The segment covering 135–144 (QPKTIPGQKQ) has biased composition (polar residues). The CCHC-type zinc-finger motif lies at 412–429 (CRCWICNIEGHYANECPN). Residues 467–489 (EEEEETSTEESDGSSTSEDSDSD) form a disordered region.

It belongs to the caulimoviridae capsid protein family. As to quaternary structure, interacts (via nuclear localization signal) with host importin alpha.

The protein localises to the virion. The protein resides in the host nucleus. Functionally, self assembles to form an icosahedral capsid, about 50 nm in diameter, nm, composed of 420 subunits of the viral capsid protein. The capsid encapsulates the genomic dsDNA. Following virus entry into host cell, provides nuclear import of the viral genome. Virus particles do not enter the nucleus, but dock at the nuclear membrane through the interaction with host importins. This chain is Capsid protein, found in Arabidopsis thaliana (Mouse-ear cress).